Reading from the N-terminus, the 417-residue chain is Protein-lysine 6-oxidase (417 aa).

An N-terminal signal peptide occupies residues 1–21 (MRFAWTVLLLGPLQLCALVHC). Residues 22–168 (APPAAGQQQP…PPSRVDGMVG (147 aa)) constitute a propeptide, removed by BMP1. The tract at residues 64 to 89 (YQPQRRRDPGAAVPGAANASAQQPRT) is disordered. Low complexity predominate over residues 73 to 84 (GAAVPGAANASA). N-linked (GlcNAc...) asparagine glycans are attached at residues N81, N97, and N144. The tract at residues 137–174 (AGASRAENQTAPGEVPALSNLRPPSRVDGMVGDDPYNP) is disordered. Y187 carries the sulfotyrosine modification. The segment at 213–417 (PDLVADPYYI…YASGCTISPY (205 aa)) is lysyl-oxidase like. Intrachain disulfides connect C238–C244, C291–C340, C324–C330, C351–C361, and C398–C412. Cu cation-binding residues include H292, H294, and H296. The lysine tyrosylquinone (Lys-Tyr) cross-link spans 320–355 (KASFCLEDTSCDYGYHRRFACTAHTQGLSPGCYDTY). Y355 carries the 2',4',5'-topaquinone modification.

Belongs to the lysyl oxidase family. As to quaternary structure, interacts with MFAP4. Interacts (via propeptide) with EFEMP2; this interaction is strong and facilitates formation of ternary complexes with ELN during elastic fiber assembly; this interaction limits interaction of EFEMP2 with FBLN5. Cu cation is required as a cofactor. The cofactor is lysine tyrosylquinone residue. The lysine tyrosylquinone cross-link (LTQ) is generated by condensation of the epsilon-amino group of a lysine with a topaquinone produced by oxidation of tyrosine. In terms of processing, proteolytically cleaved by BMP1 which removes the propeptide. Also proteolytically cleaved by ADAMTS2 and ADAMTS14, but not by ADAMTS3, at an additional cleavage site downstream of the BMP1 cleavage site. The propeptide plays a role in directing the deposition of this enzyme to elastic fibers, via interaction with tropoelastin. Cleavage by BMP1 to remove the propeptide does not increase enzymatic activity but increases binding to collagen. Cleavage by ADAMTS2 produces a form with reduced collagen-binding activity. Post-translationally, sulfated at Tyr-187 and also at either Tyr-183 or Tyr-184 which enhances binding to collagen. In terms of tissue distribution, heart, placenta, skeletal muscle, kidney, lung and pancreas.

It localises to the secreted. The protein resides in the extracellular space. The enzyme catalyses L-lysyl-[protein] + O2 + H2O = (S)-2-amino-6-oxohexanoyl-[protein] + H2O2 + NH4(+). In terms of biological role, responsible for the post-translational oxidative deamination of peptidyl lysine residues in precursors to fibrous collagen and elastin. Regulator of Ras expression. May play a role in tumor suppression. Plays a role in the aortic wall architecture. The protein is Protein-lysine 6-oxidase (LOX) of Homo sapiens (Human).